The chain runs to 126 residues: Small ribosomal subunit protein uS13 (126 aa).

The interval 95–126 is disordered; it reads GLPVRGQRTRTNARTRKGPRKTVAGKKKAPRK.

It belongs to the universal ribosomal protein uS13 family. Part of the 30S ribosomal subunit. Forms a loose heterodimer with protein S19. Forms two bridges to the 50S subunit in the 70S ribosome.

Functionally, located at the top of the head of the 30S subunit, it contacts several helices of the 16S rRNA. In the 70S ribosome it contacts the 23S rRNA (bridge B1a) and protein L5 of the 50S subunit (bridge B1b), connecting the 2 subunits; these bridges are implicated in subunit movement. Contacts the tRNAs in the A and P-sites. This chain is Small ribosomal subunit protein uS13 (rpsM), found in Thermus thermophilus (strain ATCC BAA-163 / DSM 7039 / HB27).